A 741-amino-acid polypeptide reads, in one-letter code: Catalase-peroxidase (741 aa).

Positions 1–21 (MRNFRRFTIALLVLFLGPIGA) are cleaved as a signal peptide. The tryptophyl-tyrosyl-methioninium (Trp-Tyr) (with M-257) cross-link spans 109–231 (WHSAGTYRIS…LAAVQMGLIY (123 aa)). Residue H110 is the Proton acceptor of the active site. Positions 231-257 (YVNPEGPNGNPDPLAAAKDIRETFGRM) form a cross-link, tryptophyl-tyrosyl-methioninium (Tyr-Met) (with W-109). Residue H272 participates in heme b binding.

It belongs to the peroxidase family. Peroxidase/catalase subfamily. As to quaternary structure, homodimer or homotetramer. Heme b is required as a cofactor. Formation of the three residue Trp-Tyr-Met cross-link is important for the catalase, but not the peroxidase activity of the enzyme.

It catalyses the reaction H2O2 + AH2 = A + 2 H2O. The enzyme catalyses 2 H2O2 = O2 + 2 H2O. Its function is as follows. Bifunctional enzyme with both catalase and broad-spectrum peroxidase activity. This is Catalase-peroxidase from Leptospira biflexa serovar Patoc (strain Patoc 1 / Ames).